We begin with the raw amino-acid sequence, 426 residues long: Monocarboxylate transporter 13 (426 aa).

At 1 to 10 (MAYRAEPPDG) the chain is on the cytoplasmic side. 12 helical membrane-spanning segments follow: residues 11-31 (GWGWMVVLSAFFQSALVFGVL), 52-72 (VSWIASIGIAVQQFGSPVGSA), 83-103 (VMTGGILTALGMLLASFATSL), 106-126 (LYLSIGLLSGSGWALTFTPTL), 139-159 (LAMGLALTGVGLSSFAFAPLF), 172-192 (LLLVSALSLHLVACGALLRPL), 221-241 (VALTLINTGYFIPYVHLVAHL), 244-264 (LGWDPLPAAFLLSVAAISDLV), 283-303 (LLMLWTTLTGVILALYPVAEA), 306-326 (GLVALTMAYGFTSGALTPVAF), 338-358 (IYCGLGLVQMVESIGGLLGAP), and 374-394 (FVVAGAFLLAGSGVLITLPHF). At 395–426 (FCFSAPTSKPQDLVTEALDTKVPLPEEGLGED) the chain is on the cytoplasmic side.

It belongs to the major facilitator superfamily. Monocarboxylate porter (TC 2.A.1.13) family.

It localises to the golgi apparatus membrane. It is found in the cell membrane. Proton-linked monocarboxylate transporter. May catalyze the transport of monocarboxylates across the plasma membrane. This chain is Monocarboxylate transporter 13 (SLC16A13), found in Bos taurus (Bovine).